A 185-amino-acid polypeptide reads, in one-letter code: Peroxynitrite isomerase (185 aa).

The disordered stretch occupies residues 1 to 21 (MHHPARELPFPDALRPGARPA). The GXWXGXG signature appears at 34–40 (GTWRGTG). Histidine 171 contributes to the heme b binding site.

This sequence belongs to the nitrobindin family. As to quaternary structure, homodimer. Requires heme b as cofactor.

It catalyses the reaction peroxynitrite = nitrate. It participates in nitrogen metabolism. Heme-binding protein able to scavenge peroxynitrite and to protect free L-tyrosine against peroxynitrite-mediated nitration, by acting as a peroxynitrite isomerase that converts peroxynitrite to nitrate. Therefore, this protein likely plays a role in peroxynitrite sensing and in the detoxification of reactive nitrogen and oxygen species (RNS and ROS, respectively). Is able to bind nitric oxide (NO) in vitro, but may act as a sensor of peroxynitrite levels in vivo. This Streptomyces griseus subsp. griseus (strain JCM 4626 / CBS 651.72 / NBRC 13350 / KCC S-0626 / ISP 5235) protein is Peroxynitrite isomerase.